A 507-amino-acid polypeptide reads, in one-letter code: MTEAATQLPISLNILVDSIREAANSTLDETLRSKLGQFMSSSAVSELMANLFESYVGEHEILDAGAGVGSLTAAFVQNATLNGAKSISSTCYEISEVMVYNLIQVLDLCKIRAMEFEVNWQQKIIESDFIQASVEQLLIENYSPKYNKAILNPPYLKIAAKGRERALLQKVGIEASNLYSAFVALAIKQLKSGGELVAITPRSFCNGPYFNDFRKQMLDECSLNKIHVFNSRKSAFKADNVLQENIIYHLTKGETQRKVVTVYSSTCANDINPTIFEVPFDEIVKSNNPDLFIHIVTNEQERELANKAGGLPCSLSDLGIQVSTGKVVDFRTRENLSMEYISNSVPLIFPQHLQRCSIVWPITKAKKPNALIVNEATNNLMVPNGIYVLTRRLTAKEEKRRIVASIYYPDIANVDTVGFDNKINYFHANGKPLDISLAKGLWVFLNSTLIDKYFRQMNGHTQVNATDLRALRYPTREQLEDIANQVDFGEFEQTKIDEIINQSLQLM.

The protein belongs to the N(4)/N(6)-methyltransferase family. As to quaternary structure, monomer.

The catalysed reaction is a 2'-deoxyadenosine in DNA + S-adenosyl-L-methionine = an N(6)-methyl-2'-deoxyadenosine in DNA + S-adenosyl-L-homocysteine + H(+). In terms of biological role, a gamma subtype methylase that recognizes the double-stranded sequence 5'-CTGCAG-3', methylates A-5 on both strands, and protects the DNA from cleavage by the PstI endonuclease. In Providencia stuartii, this protein is Type II methyltransferase M.PstI (pstIM).